The primary structure comprises 736 residues: Subtilisin-like protease SBT4.11 (736 aa).

Residues 1 to 25 (MAKRGAFSSFHSFLIVLLFLNSVLA) form the signal peptide. Residues 26–113 (VTHGHQDKQV…VFPNKKLKLQ (88 aa)) constitute a propeptide, activation peptide. The 78-residue stretch at 35 to 112 (VYIVYMGSLP…SVFPNKKLKL (78 aa)) folds into the Inhibitor I9 domain. Residues 117–579 (SWDFMGLKEG…AGHVDPIAAT (463 aa)) enclose the Peptidase S8 domain. The active-site Charge relay system is the Asp-145. An N-linked (GlcNAc...) asparagine glycan is attached at Asn-176. His-200 serves as the catalytic Charge relay system. 2 N-linked (GlcNAc...) asparagine glycosylation sites follow: Asn-215 and Asn-223. The 83-residue stretch at 355–437 (KFPLVYGKSA…GLQKDDFESV (83 aa)) folds into the PA domain. Ser-518 serves as the catalytic Charge relay system. Residues Asn-555, Asn-602, Asn-638, Asn-646, and Asn-656 are each glycosylated (N-linked (GlcNAc...) asparagine).

It belongs to the peptidase S8 family. In terms of processing, the C-terminal propeptide is autocleaved.

It localises to the secreted. In Arabidopsis thaliana (Mouse-ear cress), this protein is Subtilisin-like protease SBT4.11.